The chain runs to 230 residues: Ribose-5-phosphate isomerase A (230 aa).

Substrate is bound by residues 31–34, 87–90, and 100–103; these read TGST, DGAD, and KGGG. Glu109 functions as the Proton acceptor in the catalytic mechanism. Lys127 lines the substrate pocket.

The protein belongs to the ribose 5-phosphate isomerase family. As to quaternary structure, homodimer.

It catalyses the reaction aldehydo-D-ribose 5-phosphate = D-ribulose 5-phosphate. It participates in carbohydrate degradation; pentose phosphate pathway; D-ribose 5-phosphate from D-ribulose 5-phosphate (non-oxidative stage): step 1/1. In terms of biological role, catalyzes the reversible conversion of ribose-5-phosphate to ribulose 5-phosphate. The sequence is that of Ribose-5-phosphate isomerase A from Lactobacillus delbrueckii subsp. bulgaricus (strain ATCC 11842 / DSM 20081 / BCRC 10696 / JCM 1002 / NBRC 13953 / NCIMB 11778 / NCTC 12712 / WDCM 00102 / Lb 14).